The sequence spans 91 residues: Small ribosomal subunit protein uS19 (91 aa).

The protein belongs to the universal ribosomal protein uS19 family.

Protein S19 forms a complex with S13 that binds strongly to the 16S ribosomal RNA. The sequence is that of Small ribosomal subunit protein uS19 from Halorhodospira halophila (strain DSM 244 / SL1) (Ectothiorhodospira halophila (strain DSM 244 / SL1)).